The chain runs to 127 residues: Putative pre-16S rRNA nuclease (127 aa).

It belongs to the YqgF nuclease family.

It localises to the cytoplasm. Its function is as follows. Could be a nuclease involved in processing of the 5'-end of pre-16S rRNA. This is Putative pre-16S rRNA nuclease from Campylobacter jejuni subsp. jejuni serotype O:6 (strain 81116 / NCTC 11828).